Reading from the N-terminus, the 1032-residue chain is MTVKAPSVTSLRISKLSANQVQVRWDDVGANFYYFVEIAETKTNSGENLPSNQYRWINLGYTANNSFFFDDADPLTTYIIRVATAAQDFEQSDWIYTEEFETFATNAYTFQNMIEMQLANKFIQEKFTLNNSDYVNFNNDTIMAALMNESFQFSPSYVDVSSISNFIIGENEYHEIQGSIQQVCKDINRVYLMESEGILYLFERYQPVVKVSNDKGQTWKAVKLFNDRVGYPLSKTVYYQSANTTYVLGYDKIFYGRKSTDVRWSADDVRFSSQDITFAKLGDQLHLGFDVEIFATYATLPANVYRIAEAITCTDDYIYVVARDKVRYIKTSNALIDFDPLSPTYSERLFEPDTMTITGNPKAVCYKMDSICDKVFALIIGEVETLNANPRTSKIIDSADKGIYVLNHDEKTWKRVFGNTEEERRRIQPGYANMSTDGKLVSLSSSNFKFLSDNVVNDPETAAKYQLIGAVKYEFPREWLADKHYHMMAFIADETSDWETFTPQPMKYYAEPFFNWSKKSNTRCWINNSDRAVVVYADLKYTKVIENIPETSPDRLVHEYWDDGDCTIVMPNVKFTGFKKYASGMLFYKASGEIISYYDFNYRVRDTVEIIWKPTEVFLKAFLQNQEHETPWSPEEERGLADPDLRPLIGTMMPDSYLLQDSNFEAFCEAYIQYLSDGYGTQYNNLRNLIRNQYPREEHAWEYLWSEIYKRNIYLNADKRDAVARFFESRSYDFYSTKGIEASYKFLFKVLYNEEVEIEIESGAGTEYDIIVQSDSLTEDLVGQTIYTATGRCNVTYIERSYSNGKLQWTVTIHNLLGRLIAGQEVKAERLPSFEGEIIRGVKGKDLLQNNIDYINRSRSYYVMKIKSNLPSSRWKSDVIRFVHPVGFGFIAITLLTMFINVGLTLKHTETIINKYKNYKWDSGLPTEYADRIAKLTPTGEIEHDSVTGEAIYEPGPMAGVKYPLPDDYNAENNNSIFQGQLPSERRKLMSPLFDASGTTFAQFRDLVNKRLKDNIGNPRDPENPTQVKIDE.

The disordered stretch occupies residues 1012–1032 (LKDNIGNPRDPENPTQVKIDE).

Belongs to the T4likevirus baseplate wedge protein gp7 family. As to quaternary structure, heterotrimer with gp6; assembles as a (gp6)2-gp7 heterotrimeric molecule. The (gp6)2-gp7 heterotrimeric molecule further interacts with gp25 and gp53. The gp25-(gp6)2-gp7 module is involved in sheath contraction. Interacts with gp8. Binds to gp10 homotrimer; disulfide-linked. Heteromultimer with gp10; a gp10 molecule is disulfide-linked to gp7 and the other two remaining gp10 molecules form a disulfide bond. Part of the baseplate macromolecular complex which consists of gp5, gp5.4, gp27 (central spike complex); gp6, gp25, gp53 (inner baseplate); gp7, gp8 (intermediate baseplate); gp9, gp10, gp11, gp12 (peripheral); gp48 and gp54 (proximal region of the tail tube).

It localises to the virion. Functionally, intermediate/inner baseplate protein. The gp25-(gp6)2-gp7 module is involved in sheath contraction. Involved in the tail assembly. The protein is Baseplate wedge protein gp7 (7) of Enterobacteria phage T4 (Bacteriophage T4).